The following is a 189-amino-acid chain: Putative manganese efflux pump MntP (189 aa).

The next 6 helical transmembrane spans lie at 3–23, 41–61, 62–82, 103–123, 132–152, and 167–187; these read IVSTLLLALAMSADAFAAAVS, MIFGVIEATTPLVGWSLGRVA, ADYVTAWDHWIAFSILAFLGI, SFILLAMTALGTSIDAMSVGV, IVPVAFAIGIVTCIMVSAGVM, and IIGGLILIGIGSLILYKHLYG.

This sequence belongs to the MntP (TC 9.B.29) family.

The protein resides in the cell inner membrane. In terms of biological role, probably functions as a manganese efflux pump. The chain is Putative manganese efflux pump MntP from Methylobacillus flagellatus (strain ATCC 51484 / DSM 6875 / VKM B-1610 / KT).